The following is a 495-amino-acid chain: Probable cytosol aminopeptidase (495 aa).

2 residues coordinate Mn(2+): Lys-264 and Asp-269. The active site involves Lys-276. 3 residues coordinate Mn(2+): Asp-287, Asp-346, and Glu-348. Arg-350 is a catalytic residue.

It belongs to the peptidase M17 family. Mn(2+) serves as cofactor.

The protein resides in the cytoplasm. The enzyme catalyses Release of an N-terminal amino acid, Xaa-|-Yaa-, in which Xaa is preferably Leu, but may be other amino acids including Pro although not Arg or Lys, and Yaa may be Pro. Amino acid amides and methyl esters are also readily hydrolyzed, but rates on arylamides are exceedingly low.. The catalysed reaction is Release of an N-terminal amino acid, preferentially leucine, but not glutamic or aspartic acids.. Presumably involved in the processing and regular turnover of intracellular proteins. Catalyzes the removal of unsubstituted N-terminal amino acids from various peptides. In Geotalea uraniireducens (strain Rf4) (Geobacter uraniireducens), this protein is Probable cytosol aminopeptidase.